Reading from the N-terminus, the 225-residue chain is tRNA (guanine-N(7)-)-methyltransferase (225 aa).

S-adenosyl-L-methionine-binding residues include E56, E81, D108, and D131. D131 is an active-site residue. Residues K135, D167, and 204 to 207 each bind substrate; that span reads TKFE.

It belongs to the class I-like SAM-binding methyltransferase superfamily. TrmB family.

It carries out the reaction guanosine(46) in tRNA + S-adenosyl-L-methionine = N(7)-methylguanosine(46) in tRNA + S-adenosyl-L-homocysteine. The protein operates within tRNA modification; N(7)-methylguanine-tRNA biosynthesis. Functionally, catalyzes the formation of N(7)-methylguanine at position 46 (m7G46) in tRNA. In Legionella pneumophila (strain Corby), this protein is tRNA (guanine-N(7)-)-methyltransferase.